The sequence spans 90 residues: uncharacterized protein (90 aa).

This is an uncharacterized protein from Haemophilus influenzae (strain ATCC 51907 / DSM 11121 / KW20 / Rd).